Here is a 412-residue protein sequence, read N- to C-terminus: Putative competence-damage inducible protein (412 aa).

It belongs to the CinA family.

This Bacillus cereus (strain G9842) protein is Putative competence-damage inducible protein.